Here is a 55-residue protein sequence, read N- to C-terminus: Conotoxin vc5b (55 aa).

The N-terminal stretch at 1 to 15 is a signal peptide; the sequence is VILLLLIASAPSVDA. Positions 16-41 are excised as a propeptide; that stretch reads QPKTKDDVPLAPLHDNAKSALQHLNQ. At Gln53 the chain carries Glutamine amide.

Post-translationally, contains 2 disulfide bonds that can be either 'C1-C3, C2-C4' or 'C1-C4, C2-C3', since these disulfide connectivities have been observed for conotoxins with cysteine framework V (for examples, see AC P0DQQ7 and AC P81755). In terms of tissue distribution, expressed by the venom duct.

It localises to the secreted. This is Conotoxin vc5b from Conus victoriae (Queen Victoria cone).